A 114-amino-acid chain; its full sequence is Ribosome-binding factor A (114 aa).

This sequence belongs to the RbfA family. As to quaternary structure, monomer. Binds 30S ribosomal subunits, but not 50S ribosomal subunits or 70S ribosomes.

The protein localises to the cytoplasm. Its function is as follows. One of several proteins that assist in the late maturation steps of the functional core of the 30S ribosomal subunit. Associates with free 30S ribosomal subunits (but not with 30S subunits that are part of 70S ribosomes or polysomes). Required for efficient processing of 16S rRNA. May interact with the 5'-terminal helix region of 16S rRNA. This Listeria innocua serovar 6a (strain ATCC BAA-680 / CLIP 11262) protein is Ribosome-binding factor A.